The following is a 247-amino-acid chain: Trypsin-2 (247 aa).

The signal sequence occupies residues 1–15 (MNLLLILTFVAAAVA). Positions 16–23 (APFDDDDK) are cleaved as a propeptide — activation peptide. The 221-residue stretch at 24–244 (IVGGYICEEN…YVDWIKDTIA (221 aa)) folds into the Peptidase S1 domain. Intrachain disulfides connect cysteine 30–cysteine 160, cysteine 48–cysteine 64, cysteine 171–cysteine 185, and cysteine 196–cysteine 220. Histidine 63 acts as the Charge relay system in catalysis. Ca(2+)-binding residues include glutamate 75, asparagine 77, valine 80, and glutamate 85. Aspartate 107 acts as the Charge relay system in catalysis. At tyrosine 154 the chain carries Sulfotyrosine. The active-site Charge relay system is the serine 200.

This sequence belongs to the peptidase S1 family. The cofactor is Ca(2+). Sulfated on tyrosine. In terms of processing, sulfation at Tyr-154 increases selectivity towards basic versus apolar residues at the P2' position of inhibitors that bind in a substrate-like fashion. Although the increase in selectivity is relatively small, it may facilitate digestion of a broader range of dietary proteins. In terms of tissue distribution, expressed in Paneth cells, at the base of small intestinal crypts.

It is found in the secreted. Its subcellular location is the extracellular space. It catalyses the reaction Preferential cleavage: Arg-|-Xaa, Lys-|-Xaa.. Its function is as follows. In the ileum, may be involved in defensin processing, including DEFA5. This chain is Trypsin-2 (PRSS2), found in Homo sapiens (Human).